The chain runs to 656 residues: tRNA 5-methylaminomethyl-2-thiouridine biosynthesis bifunctional protein MnmC (656 aa).

The interval 1–236 (MTDPLIPAVL…KRAMLVGRFA (236 aa)) is tRNA (mnm(5)s(2)U34)-methyltransferase. The interval 260-656 (IGTGLAGCAV…LRALRQGTVS (397 aa)) is FAD-dependent cmnm(5)s(2)U34 oxidoreductase.

It in the N-terminal section; belongs to the methyltransferase superfamily. tRNA (mnm(5)s(2)U34)-methyltransferase family. In the C-terminal section; belongs to the DAO family. The cofactor is FAD.

It localises to the cytoplasm. The enzyme catalyses 5-aminomethyl-2-thiouridine(34) in tRNA + S-adenosyl-L-methionine = 5-methylaminomethyl-2-thiouridine(34) in tRNA + S-adenosyl-L-homocysteine + H(+). Its function is as follows. Catalyzes the last two steps in the biosynthesis of 5-methylaminomethyl-2-thiouridine (mnm(5)s(2)U) at the wobble position (U34) in tRNA. Catalyzes the FAD-dependent demodification of cmnm(5)s(2)U34 to nm(5)s(2)U34, followed by the transfer of a methyl group from S-adenosyl-L-methionine to nm(5)s(2)U34, to form mnm(5)s(2)U34. This Paraburkholderia xenovorans (strain LB400) protein is tRNA 5-methylaminomethyl-2-thiouridine biosynthesis bifunctional protein MnmC.